Here is a 229-residue protein sequence, read N- to C-terminus: Large ribosomal subunit protein uL1 (229 aa).

It belongs to the universal ribosomal protein uL1 family. In terms of assembly, part of the 50S ribosomal subunit.

Its function is as follows. Binds directly to 23S rRNA. The L1 stalk is quite mobile in the ribosome, and is involved in E site tRNA release. Protein L1 is also a translational repressor protein, it controls the translation of the L11 operon by binding to its mRNA. The protein is Large ribosomal subunit protein uL1 of Chlorobium luteolum (strain DSM 273 / BCRC 81028 / 2530) (Pelodictyon luteolum).